Here is a 745-residue protein sequence, read N- to C-terminus: Phosphoribosylformylglycinamidine synthase subunit PurL (745 aa).

The active site involves His-47. ATP contacts are provided by Tyr-50 and Lys-90. Mg(2+) is bound at residue Glu-92. Substrate is bound by residues 93-96 and Arg-115; that span reads SHNH. His-94 (proton acceptor) is an active-site residue. Asp-116 lines the Mg(2+) pocket. Substrate is bound at residue Gln-240. Position 268 (Asp-268) interacts with Mg(2+). 312-314 provides a ligand contact to substrate; the sequence is ESQ. ATP contacts are provided by Asn-501 and Gly-538. Residue Asn-539 coordinates Mg(2+). Position 541 (Ser-541) interacts with substrate.

The protein belongs to the FGAMS family. In terms of assembly, monomer. Part of the FGAM synthase complex composed of 1 PurL, 1 PurQ and 2 PurS subunits.

It localises to the cytoplasm. The enzyme catalyses N(2)-formyl-N(1)-(5-phospho-beta-D-ribosyl)glycinamide + L-glutamine + ATP + H2O = 2-formamido-N(1)-(5-O-phospho-beta-D-ribosyl)acetamidine + L-glutamate + ADP + phosphate + H(+). It participates in purine metabolism; IMP biosynthesis via de novo pathway; 5-amino-1-(5-phospho-D-ribosyl)imidazole from N(2)-formyl-N(1)-(5-phospho-D-ribosyl)glycinamide: step 1/2. Part of the phosphoribosylformylglycinamidine synthase complex involved in the purines biosynthetic pathway. Catalyzes the ATP-dependent conversion of formylglycinamide ribonucleotide (FGAR) and glutamine to yield formylglycinamidine ribonucleotide (FGAM) and glutamate. The FGAM synthase complex is composed of three subunits. PurQ produces an ammonia molecule by converting glutamine to glutamate. PurL transfers the ammonia molecule to FGAR to form FGAM in an ATP-dependent manner. PurS interacts with PurQ and PurL and is thought to assist in the transfer of the ammonia molecule from PurQ to PurL. This is Phosphoribosylformylglycinamidine synthase subunit PurL from Leptospira interrogans serogroup Icterohaemorrhagiae serovar copenhageni (strain Fiocruz L1-130).